Consider the following 263-residue polypeptide: Undecaprenyl-diphosphatase 2 (263 aa).

A run of 8 helical transmembrane segments spans residues 15–37 (GLTEFLPVSSTGHMILTGHLLGF), 42–62 (AKVFEVVIQLGSILAVVVIFW), 83–103 (LHIIIGMIPAGVLGVLFHSAI), 106–126 (VLFGPGPVVISLVAGGILMIV), 142–162 (ITYKQAFTIGMFQCLALWPGF), 183–203 (AEYTFILAVPMMVAASGLDLI), 216–236 (LFATGFITAFVVAMLAIVSFL), and 242–262 (VKLTPFAYYRFILAAVFYFFI).

It belongs to the UppP family.

Its subcellular location is the cell membrane. It catalyses the reaction di-trans,octa-cis-undecaprenyl diphosphate + H2O = di-trans,octa-cis-undecaprenyl phosphate + phosphate + H(+). In terms of biological role, catalyzes the dephosphorylation of undecaprenyl diphosphate (UPP). Confers resistance to bacitracin. The protein is Undecaprenyl-diphosphatase 2 of Bacillus cereus (strain ATCC 10987 / NRS 248).